The chain runs to 78 residues: Acyl carrier protein (78 aa).

The 76-residue stretch at 2–77 folds into the Carrier domain; the sequence is SNLEERVKKI…AAIDYVTANA (76 aa). S37 is modified (O-(pantetheine 4'-phosphoryl)serine).

It belongs to the acyl carrier protein (ACP) family. Post-translationally, 4'-phosphopantetheine is transferred from CoA to a specific serine of apo-ACP by AcpS. This modification is essential for activity because fatty acids are bound in thioester linkage to the sulfhydryl of the prosthetic group.

The protein localises to the cytoplasm. It participates in lipid metabolism; fatty acid biosynthesis. Carrier of the growing fatty acid chain in fatty acid biosynthesis. This Vibrio vulnificus (strain CMCP6) protein is Acyl carrier protein.